Reading from the N-terminus, the 92-residue chain is MAKRTKKVGITGKYGVRYGSSLRRQVKKLEVQQHARYDCSFCGKKTVRRGAAGIWSCHSCKKTVAGGAYTVSTAAAATVRSTIRRLRDMVEA.

The C4-type zinc finger occupies 39–60 (CSFCGKKTVRRGAAGIWSCHSC).

This sequence belongs to the eukaryotic ribosomal protein eL43 family.

The sequence is that of Large ribosomal subunit protein eL43 (RPL43) from Candida glabrata (strain ATCC 2001 / BCRC 20586 / JCM 3761 / NBRC 0622 / NRRL Y-65 / CBS 138) (Yeast).